Here is a 152-residue protein sequence, read N- to C-terminus: Protein FERTILITY RESTORER RF2, mitochondrial (152 aa).

A mitochondrion-targeting transit peptide spans 1 to 52 (MSTLVTCSLPGAVTTHASTRRFGGSQFQTSQASCISFKREVSAKAVLRSVRC). Polar residues predominate over residues 52 to 69 (CNATQTQSAQRKSSTATV). Residues 52 to 99 (CNATQTQSAQRKSSTATVKRSDPKGKIQGPKLDDGSGGFPPFRFGKGG) form a disordered region.

The protein resides in the mitochondrion. Functionally, restores fertility in rice varieties with LD-type cytoplasmic male sterility (CMS). CMS is caused by genetic incompatibility between nuclei and mitochondria within male reproductive organs. Corresponds to the functional allele of RF2, which is dependent of the presence of Ile-78 in the japonica cultivars Fukuyama and Owarihatamochi (AC F1SZ42), and indica cultivar Kasalath (AC F1SZ41). Non-functional RF2 alleles are found in japonica cultivars Taichung 65 and Nipponbare (AC F1SZ44), where Ile-78 is replaced by Thr-78. This Oryza sativa subsp. japonica (Rice) protein is Protein FERTILITY RESTORER RF2, mitochondrial.